Consider the following 182-residue polypeptide: Ribosome-recycling factor (182 aa).

The protein belongs to the RRF family.

The protein localises to the cytoplasm. Functionally, responsible for the release of ribosomes from messenger RNA at the termination of protein biosynthesis. May increase the efficiency of translation by recycling ribosomes from one round of translation to another. The chain is Ribosome-recycling factor from Mycoplasma capricolum subsp. capricolum (strain California kid / ATCC 27343 / NCTC 10154).